Here is a 195-residue protein sequence, read N- to C-terminus: Peptidyl-tRNA hydrolase (195 aa).

Position 17 (Tyr-17) interacts with tRNA. His-22 serves as the catalytic Proton acceptor. The tRNA site is built by Tyr-68, Asn-70, and Asn-116.

Belongs to the PTH family. As to quaternary structure, monomer.

Its subcellular location is the cytoplasm. The enzyme catalyses an N-acyl-L-alpha-aminoacyl-tRNA + H2O = an N-acyl-L-amino acid + a tRNA + H(+). Functionally, hydrolyzes ribosome-free peptidyl-tRNAs (with 1 or more amino acids incorporated), which drop off the ribosome during protein synthesis, or as a result of ribosome stalling. In terms of biological role, catalyzes the release of premature peptidyl moieties from peptidyl-tRNA molecules trapped in stalled 50S ribosomal subunits, and thus maintains levels of free tRNAs and 50S ribosomes. The sequence is that of Peptidyl-tRNA hydrolase from Shewanella sp. (strain MR-4).